The following is a 200-amino-acid chain: Rubrerythrin (200 aa).

The region spanning 12–155 (SIKGSKTEKH…ALLAHVEDGS (144 aa)) is the Ferritin-like diiron domain. Fe(3+)-binding residues include Glu-29, Glu-62, Glu-103, Glu-106, Glu-137, His-140, Cys-167, Cys-170, Cys-183, and Cys-186. In terms of domain architecture, Rubredoxin-like spans 162-200 (EIAWQCRNCGYVITSKKAPKLCPACAHPQAYFEPMKTNY).

As to quaternary structure, homodimer. Possesses two rubredoxin-like centers and two non-sulfur oxo-bridged di-iron centers per dimer. It depends on Fe(3+) as a cofactor.

The protein localises to the cytoplasm. May provide oxidative stress protection via catalytic reduction of intracellular hydrogen peroxide. The sequence is that of Rubrerythrin (rbr) from Porphyromonas gingivalis (strain ATCC BAA-308 / W83).